The sequence spans 253 residues: Matrix protein (253 aa).

The disordered stretch occupies residues Met-1–Asp-26. A PTAP/PSAP motif motif is present at residues Pro-55–Pro-58.

As to quaternary structure, homomultimer. Interacts with viral nucleocapsid. Interacts with host TSG101.

The protein resides in the virion membrane. It is found in the host endomembrane system. It localises to the host nucleus membrane. Its function is as follows. Plays a major role in assembly and budding of virion, by recruiting cellular partners of the ESCRT complexes that play a key role in releasing the budding particle from the host membrane. Condensates the ribonucleocapsid core during virus assembly. This chain is Matrix protein (M), found in Bos taurus (Bovine).